Reading from the N-terminus, the 104-residue chain is Glutaredoxin (104 aa).

One can recognise a Glutaredoxin domain in the interval 3–103 (MIKAQELVSS…PLLTEAGAVK (101 aa)). An intrachain disulfide couples C23 to C26.

The protein belongs to the glutaredoxin family. CPYC subfamily.

The protein resides in the cytoplasm. In terms of biological role, has a glutathione-disulfide oxidoreductase activity in the presence of NADPH and glutathione reductase. Reduces low molecular weight disulfides and proteins. This is Glutaredoxin from Vernicia fordii (Tung).